The primary structure comprises 182 residues: Isopentenyl-diphosphate Delta-isomerase (182 aa).

Residues His25 and His32 each contribute to the Mn(2+) site. Residues 30–164 (LLHLAFSSWL…PWAFSPWMVM (135 aa)) form the Nudix hydrolase domain. Residue Cys67 is part of the active site. Residue His69 participates in Mn(2+) binding. Glu87 contacts Mg(2+). The Mn(2+) site is built by Glu114 and Glu116. Residue Glu116 is part of the active site.

The protein belongs to the IPP isomerase type 1 family. Homodimer. It depends on Mg(2+) as a cofactor. Requires Mn(2+) as cofactor.

The protein localises to the cytoplasm. It carries out the reaction isopentenyl diphosphate = dimethylallyl diphosphate. Its pathway is isoprenoid biosynthesis; dimethylallyl diphosphate biosynthesis; dimethylallyl diphosphate from isopentenyl diphosphate: step 1/1. Catalyzes the 1,3-allylic rearrangement of the homoallylic substrate isopentenyl (IPP) to its highly electrophilic allylic isomer, dimethylallyl diphosphate (DMAPP). The polypeptide is Isopentenyl-diphosphate Delta-isomerase (Escherichia coli O127:H6 (strain E2348/69 / EPEC)).